The sequence spans 161 residues: Transcription initiation factor TFIID subunit 12 (161 aa).

Residues 15-55 (FSSIKPEPASTPPQGSMANSTAVVKIPGTPGAGGRLSPENN) are disordered. K19 is covalently cross-linked (Glycyl lysine isopeptide (Lys-Gly) (interchain with G-Cter in SUMO2)). Positions 26 to 36 (PPQGSMANSTA) are enriched in polar residues. A Phosphothreonine modification is found at T43. Phosphoserine is present on S51. At T59 the chain carries Phosphothreonine. The Histone-fold domain occupies 59–126 (TKKKLQDLVR…QLHLERQWNM (68 aa)).

Belongs to the TAF12 family. In terms of assembly, component of the TFIID basal transcription factor complex, composed of TATA-box-binding protein TBP, and a number of TBP-associated factors (TAFs), including TAF1, TAF2, TAF3, TAF4, TAF5, TAF6, TAF7, TAF8, TAF9, TAF10, TAF11, TAF12 and TAF13. Component of the TATA-binding protein-free TAF complex (TFTC), the PCAF histone acetylase complex and the STAGA transcription coactivator-HAT complex. Component of the PCAF complex, at least composed of TADA2L/ADA2, TADA3L/ADA3, TAF5L/PAF65-beta, SUPT3H, TAF6L, TAF9, TAF10, TAF12 and TRRAP. Component of the STAGA transcription coactivator-HAT complex, at least composed of SUPT3H, GCN5L2, TAF5L, TAF6L, STAF65-gamma/SUPT7L, TADA3L, TAD1L, TAF10, TAF12, TRRAP and TAF9. Interacts with ATF7 (via the transactivation domain); the interaction is prevented by sumoylation of ATF7. Interacts with TBP; the interaction is direct. Interacts with TAF10; the interaction is direct. Interacts with ATF7, promoting transactivation by ATF7. As to quaternary structure, does not promote the transactivation of ATF7. As to expression, ubiquitous.

The protein resides in the nucleus. Functionally, the TFIID basal transcription factor complex plays a major role in the initiation of RNA polymerase II (Pol II)-dependent transcription. TFIID recognizes and binds promoters with or without a TATA box via its subunit TBP, a TATA-box-binding protein, and promotes assembly of the pre-initiation complex (PIC). The TFIID complex consists of TBP and TBP-associated factors (TAFs), including TAF1, TAF2, TAF3, TAF4, TAF5, TAF6, TAF7, TAF8, TAF9, TAF10, TAF11, TAF12 and TAF13. Component of the TATA-binding protein-free TAF complex (TFTC), the PCAF histone acetylase complex and the STAGA transcription coactivator-HAT complex. This is Transcription initiation factor TFIID subunit 12 from Homo sapiens (Human).